Here is a 296-residue protein sequence, read N- to C-terminus: UDP-N-acetylglucosamine transporter TMEM241 (296 aa).

The next 10 helical transmembrane spans lie at 7 to 29 (LVGL…VLSV), 32 to 52 (FTYP…LLHV), 67 to 87 (SHVL…YAGS), 93 to 113 (LAIP…CGYQ), 121 to 141 (TSPA…CLPF), 146 to 166 (FNPD…AYKI), 187 to 207 (IFSV…FSVL), 211 to 231 (FLYF…GFFL), 250 to 270 (WIFF…DAIL), and 271 to 291 (TSAT…LVFS).

Belongs to the nucleotide-sugar transporter family. SLC35A subfamily.

The protein localises to the golgi apparatus. It is found in the cis-Golgi network membrane. Golgi-localized UDP-N-acetylglucosamine (UDP-GlcNAc) transporter that transports UDP-N-acetylglucosamine into Golgi lumen. Contributes to lysosomal targeting of NPC2, a key protein required for lysosomal cholesterol exiting, and that utilizes the mannose-6-phosphate (M6P) modification pathway for its lysosomal targeting. This chain is UDP-N-acetylglucosamine transporter TMEM241, found in Homo sapiens (Human).